A 78-amino-acid polypeptide reads, in one-letter code: Large ribosomal subunit protein bL28 (78 aa).

Residues 1–21 (MSRVCQVTGKKPMVGNNRSHA) are disordered.

It belongs to the bacterial ribosomal protein bL28 family.

The polypeptide is Large ribosomal subunit protein bL28 (Shewanella loihica (strain ATCC BAA-1088 / PV-4)).